The primary structure comprises 241 residues: C-type lectin domain family 9 member A (241 aa).

The Cytoplasmic segment spans residues 1-34 (MHEEEIYTSLQWDIPTSEASQKCPSLSKCPGTWC). Positions 5 to 10 (EIYTSL) match the ITAM-like motif. A helical; Signal-anchor for type II membrane protein membrane pass occupies residues 35–55 (IVTVISCVVCVGLLAASIFLG). The Extracellular segment spans residues 56-241 (IKFSQVSSLV…CEKKAFGSCI (186 aa)). Asn-81 and Asn-88 each carry an N-linked (GlcNAc...) asparagine glycan. Cys-113 and Cys-124 are joined by a disulfide. The 114-residue stretch at 120–233 (NGKSCYYAFD…CSNWKYFICE (114 aa)) folds into the C-type lectin domain. 3 N-linked (GlcNAc...) asparagine glycosylation sites follow: Asn-135, Asn-161, and Asn-223. Intrachain disulfides connect Cys-141–Cys-232 and Cys-211–Cys-224.

Homodimer. In terms of processing, N-glycosylated. As to expression, high expression in the spleen, moderate to low levels in several other tissues and cell types, but no detectable expression in skin dendritic cells or CD4(+) T-cells.

The protein resides in the membrane. In terms of biological role, functions as an endocytic receptor on a small subset of myeloid cells specialized for the uptake and processing of material from dead cells. Recognizes filamentous form of actin in association with particular actin-binding domains of cytoskeletal proteins, including spectrin, exposed when cell membranes are damaged, and mediate the cross-presentation of dead-cell associated antigens in a Syk-dependent manner. This is C-type lectin domain family 9 member A (Clec9a) from Rattus norvegicus (Rat).